The chain runs to 173 residues: Large ribosomal subunit protein uL16 (173 aa).

This sequence belongs to the universal ribosomal protein uL16 family.

The sequence is that of Large ribosomal subunit protein uL16 from Methanococcus aeolicus (strain ATCC BAA-1280 / DSM 17508 / OCM 812 / Nankai-3).